The following is a 216-amino-acid chain: Somatotropin (216 aa).

The N-terminal stretch at 1-26 (MAADSQTPWLLTFSLLCLLWPQEAGA) is a signal peptide. His45 provides a ligand contact to Zn(2+). An intrachain disulfide couples Cys78 to Cys189. At Ser131 the chain carries Phosphoserine. Residue Glu198 participates in Zn(2+) binding. A disulfide bond links Cys206 and Cys214.

This sequence belongs to the somatotropin/prolactin family.

The protein resides in the secreted. In terms of biological role, plays an important role in growth control. Its major role in stimulating body growth is to stimulate the liver and other tissues to secrete IGF1. It stimulates both the differentiation and proliferation of myoblasts. It also stimulates amino acid uptake and protein synthesis in muscle and other tissues. This Rattus norvegicus (Rat) protein is Somatotropin (Gh1).